Reading from the N-terminus, the 65-residue chain is uncharacterized protein (65 aa).

This is an uncharacterized protein from Saccharomyces cerevisiae (strain ATCC 204508 / S288c) (Baker's yeast).